We begin with the raw amino-acid sequence, 212 residues long: Thymidylate kinase (212 aa).

11 to 18 (GGEGVGKS) is an ATP binding site.

It belongs to the thymidylate kinase family.

The catalysed reaction is dTMP + ATP = dTDP + ADP. Functionally, phosphorylation of dTMP to form dTDP in both de novo and salvage pathways of dTTP synthesis. The sequence is that of Thymidylate kinase from Chromohalobacter salexigens (strain ATCC BAA-138 / DSM 3043 / CIP 106854 / NCIMB 13768 / 1H11).